The following is a 293-amino-acid chain: Nucleotide-binding protein BCQ_4976 (293 aa).

14–21 (GMSGAGKT) is an ATP binding site. 65–68 (DLRG) is a binding site for GTP.

It belongs to the RapZ-like family.

Its function is as follows. Displays ATPase and GTPase activities. This is Nucleotide-binding protein BCQ_4976 from Bacillus cereus (strain Q1).